The primary structure comprises 112 residues: uncharacterized protein (112 aa).

Coiled coils occupy residues 15-53 (AEKK…FFKF) and 86-103 (LDYE…TERK).

This is an uncharacterized protein from Aquifex aeolicus (strain VF5).